A 438-amino-acid chain; its full sequence is 23S rRNA (uracil(1939)-C(5))-methyltransferase RlmD (438 aa).

One can recognise a TRAM domain in the interval 11–69 (LQPESKHQQVLVEKLDHQGAGIAYLNKKPLFIDGTLPGEEVVTQLTESKSKFARGKLIK). [4Fe-4S] cluster contacts are provided by cysteine 82, cysteine 88, cysteine 91, and cysteine 169. 6 residues coordinate S-adenosyl-L-methionine: glutamine 272, phenylalanine 301, asparagine 306, glutamate 322, asparagine 349, and aspartate 370. The Nucleophile role is filled by cysteine 396.

This sequence belongs to the class I-like SAM-binding methyltransferase superfamily. RNA M5U methyltransferase family. RlmD subfamily.

The enzyme catalyses uridine(1939) in 23S rRNA + S-adenosyl-L-methionine = 5-methyluridine(1939) in 23S rRNA + S-adenosyl-L-homocysteine + H(+). Functionally, catalyzes the formation of 5-methyl-uridine at position 1939 (m5U1939) in 23S rRNA. This chain is 23S rRNA (uracil(1939)-C(5))-methyltransferase RlmD, found in Vibrio vulnificus (strain YJ016).